A 146-amino-acid chain; its full sequence is MLGLIQRVRRASVEVDQQVVGEIDQGMLLLLGIQKTDTEASADKLIDKLLAYRLFADADNRMNCNLQQVDGGILVVSQFTLAADTKKGLRPSFSSAAPPAQAQQLYDYFVTQLRSRHAKVATGIFAADMQVSLVNDGPVTFMLEMD.

The Gly-cisPro motif, important for rejection of L-amino acids signature appears at 137 to 138 (GP).

The protein belongs to the DTD family. As to quaternary structure, homodimer.

The protein resides in the cytoplasm. The catalysed reaction is glycyl-tRNA(Ala) + H2O = tRNA(Ala) + glycine + H(+). It carries out the reaction a D-aminoacyl-tRNA + H2O = a tRNA + a D-alpha-amino acid + H(+). In terms of biological role, an aminoacyl-tRNA editing enzyme that deacylates mischarged D-aminoacyl-tRNAs. Also deacylates mischarged glycyl-tRNA(Ala), protecting cells against glycine mischarging by AlaRS. Acts via tRNA-based rather than protein-based catalysis; rejects L-amino acids rather than detecting D-amino acids in the active site. By recycling D-aminoacyl-tRNA to D-amino acids and free tRNA molecules, this enzyme counteracts the toxicity associated with the formation of D-aminoacyl-tRNA entities in vivo and helps enforce protein L-homochirality. The protein is D-aminoacyl-tRNA deacylase of Cellvibrio japonicus (strain Ueda107) (Pseudomonas fluorescens subsp. cellulosa).